The sequence spans 290 residues: Eukaryotic translation initiation factor 3 subunit G (290 aa).

The disordered stretch occupies residues 1 to 34; that stretch reads MSRLGNRAADWADDEEFDDPSALPAQQVTTNKDG. The RRM domain occupies 210 to 288; the sequence is ATLRVTNVSE…LILRVEFAKR (79 aa).

This sequence belongs to the eIF-3 subunit G family. Component of the eukaryotic translation initiation factor 3 (eIF-3) complex.

It is found in the cytoplasm. RNA-binding component of the eukaryotic translation initiation factor 3 (eIF-3) complex, which is involved in protein synthesis of a specialized repertoire of mRNAs and, together with other initiation factors, stimulates binding of mRNA and methionyl-tRNAi to the 40S ribosome. The eIF-3 complex specifically targets and initiates translation of a subset of mRNAs involved in cell proliferation. This subunit can bind 18S rRNA. The sequence is that of Eukaryotic translation initiation factor 3 subunit G from Neosartorya fischeri (strain ATCC 1020 / DSM 3700 / CBS 544.65 / FGSC A1164 / JCM 1740 / NRRL 181 / WB 181) (Aspergillus fischerianus).